The following is a 282-amino-acid chain: MKLAVITDSTATLPIDLKQDKAIFSLDIPVIIDDETYFEGRNLSIDDFYQKMADSKNLPKTSQPSLSELDNLLGLLSSKGYTHVIGLFLAGGISGFWQNIQFLAEEHPEIEMAFPDSKITSAPLGSMVKNVLDWSRQGMTFQAILNKLQEQIDGTTAFIMVDDLNHLVKGGRLSNGSALLGNLLSIKPILRFDEEGKIVVYEKVRTEKKAMKRLVEILNDLIADGQYNVSIIHSKAQDKADYLKRLLQDSGYQYDIEEVHFGAVIATHLGEGAIAFGVTPRL.

Positions 3-280 (LAVITDSTAT…EGAIAFGVTP (278 aa)) constitute a DegV domain. Positions 61 and 94 each coordinate hexadecanoate.

In terms of biological role, may bind long-chain fatty acids, such as palmitate, and may play a role in lipid transport or fatty acid metabolism. The chain is DegV domain-containing protein SpyM3_0586 from Streptococcus pyogenes serotype M3 (strain ATCC BAA-595 / MGAS315).